The chain runs to 880 residues: Alanine--tRNA ligase (880 aa).

Residues histidine 569, histidine 573, cysteine 671, and histidine 675 each contribute to the Zn(2+) site.

This sequence belongs to the class-II aminoacyl-tRNA synthetase family. Homotetramer. Requires Zn(2+) as cofactor.

It is found in the cytoplasm. The catalysed reaction is tRNA(Ala) + L-alanine + ATP = L-alanyl-tRNA(Ala) + AMP + diphosphate. Catalyzes the attachment of alanine to tRNA(Ala) in a two-step reaction: alanine is first activated by ATP to form Ala-AMP and then transferred to the acceptor end of tRNA(Ala). Also edits incorrectly charged Ser-tRNA(Ala) and Gly-tRNA(Ala) via its editing domain. The chain is Alanine--tRNA ligase from Buchnera aphidicola subsp. Baizongia pistaciae (strain Bp).